Here is a 259-residue protein sequence, read N- to C-terminus: uncharacterized protein (259 aa).

The signal sequence occupies residues 1–22 (MKHSKKLLLCISFLLITFFISG). C23 is lipidated: N-palmitoyl cysteine. Residue C23 is the site of S-diacylglycerol cysteine attachment.

It belongs to the staphylococcal tandem lipoprotein family.

It is found in the cell membrane. This is an uncharacterized protein from Staphylococcus epidermidis (strain ATCC 35984 / DSM 28319 / BCRC 17069 / CCUG 31568 / BM 3577 / RP62A).